Here is a 95-residue protein sequence, read N- to C-terminus: Protein S100-A10 (95 aa).

Residues lysine 23, lysine 28, lysine 54, and lysine 57 each carry the N6-acetyllysine modification. The 36-residue stretch at 47 to 82 (KDPLAVDKIMKDLDQCRDGKVGFQSFLSLVAGLIIA) folds into the EF-hand domain. The segment at 60–71 (DQCRDGKVGFQS) is ancestral calcium site.

It belongs to the S-100 family. As to quaternary structure, heterotetramer containing 2 light chains of S100A10/p11 and 2 heavy chains of ANXA2/p36. Interacts with SCN10A. Interacts with TASOR.

Functionally, because S100A10 induces the dimerization of ANXA2/p36, it may function as a regulator of protein phosphorylation in that the ANXA2 monomer is the preferred target (in vitro) of tyrosine-specific kinase. This chain is Protein S100-A10 (S100a10), found in Rattus norvegicus (Rat).